The following is a 573-amino-acid chain: N(2)-(2-carboxyethyl)arginine synthase (573 aa).

The substrate site is built by Tyr271 and Asp301. Thiamine diphosphate is bound at residue 410–413 (IGFF). 414–415 (RH) is a substrate binding site. 436–438 (SSF) contributes to the thiamine diphosphate binding site. Asp463 is a binding site for Mg(2+). Residues 464–465 (GG), 490–495 (NDTNGL), and Tyr561 contribute to the thiamine diphosphate site. Positions 490 and 492 each coordinate Mg(2+). Substrate is bound at residue Leu571.

Homotetramer; dimer of dimers. Mg(2+) serves as cofactor. Thiamine diphosphate is required as a cofactor.

It catalyses the reaction D-glyceraldehyde 3-phosphate + L-arginine = N(2)-(2-carboxyethyl)-L-arginine + phosphate + H(+). Functionally, involved in the biosynthesis of the beta-lactamase inhibitor, clavulanic acid. Catalyzes the thiamine diphosphate (ThDP) dependent condensation of D-glyceraldehyde-3-phosphate (D-G3P) with L-arginine to yield the beta-amino acid, N2-(2-carboxyethyl)arginine (CEA) via a beta-elimination resulting in the formation of an enol which undergoes a second elimination to generate the alpha,beta-unsaturated acryloyl-ThDP. The chain is N(2)-(2-carboxyethyl)arginine synthase from Streptomyces clavuligerus.